The sequence spans 504 residues: Argininosuccinate lyase 2 (504 aa).

Belongs to the lyase 1 family. Argininosuccinate lyase subfamily.

Its subcellular location is the cytoplasm. It catalyses the reaction 2-(N(omega)-L-arginino)succinate = fumarate + L-arginine. It functions in the pathway amino-acid biosynthesis; L-arginine biosynthesis; L-arginine from L-ornithine and carbamoyl phosphate: step 3/3. The chain is Argininosuccinate lyase 2 from Agrobacterium fabrum (strain C58 / ATCC 33970) (Agrobacterium tumefaciens (strain C58)).